The primary structure comprises 109 residues: Small ribosomal subunit protein uS17 (109 aa).

Belongs to the universal ribosomal protein uS17 family. In terms of assembly, part of the 30S ribosomal subunit.

One of the primary rRNA binding proteins, it binds specifically to the 5'-end of 16S ribosomal RNA. The sequence is that of Small ribosomal subunit protein uS17 from Halobacterium salinarum (strain ATCC 29341 / DSM 671 / R1).